The primary structure comprises 349 residues: N-acetyl-gamma-glutamyl-phosphate reductase (349 aa).

Cys-153 is a catalytic residue.

Belongs to the NAGSA dehydrogenase family. Type 1 subfamily.

It is found in the cytoplasm. The enzyme catalyses N-acetyl-L-glutamate 5-semialdehyde + phosphate + NADP(+) = N-acetyl-L-glutamyl 5-phosphate + NADPH + H(+). The protein operates within amino-acid biosynthesis; L-arginine biosynthesis; N(2)-acetyl-L-ornithine from L-glutamate: step 3/4. Its function is as follows. Catalyzes the NADPH-dependent reduction of N-acetyl-5-glutamyl phosphate to yield N-acetyl-L-glutamate 5-semialdehyde. In Magnetococcus marinus (strain ATCC BAA-1437 / JCM 17883 / MC-1), this protein is N-acetyl-gamma-glutamyl-phosphate reductase.